Reading from the N-terminus, the 262-residue chain is Octanoyltransferase (262 aa).

One can recognise a BPL/LPL catalytic domain in the interval 60–248; that stretch reads GTADELVWLV…AFEMVFGPTR (189 aa). Residues 99–106, 179–181, and 192–194 contribute to the substrate site; these read RGGEYTYH, AIG, and GLS. Cys210 serves as the catalytic Acyl-thioester intermediate.

It belongs to the LipB family.

Its subcellular location is the cytoplasm. The catalysed reaction is octanoyl-[ACP] + L-lysyl-[protein] = N(6)-octanoyl-L-lysyl-[protein] + holo-[ACP] + H(+). Its pathway is protein modification; protein lipoylation via endogenous pathway; protein N(6)-(lipoyl)lysine from octanoyl-[acyl-carrier-protein]: step 1/2. Its function is as follows. Catalyzes the transfer of endogenously produced octanoic acid from octanoyl-acyl-carrier-protein onto the lipoyl domains of lipoate-dependent enzymes. Lipoyl-ACP can also act as a substrate although octanoyl-ACP is likely to be the physiological substrate. This Sinorhizobium medicae (strain WSM419) (Ensifer medicae) protein is Octanoyltransferase.